The primary structure comprises 142 residues: Ribosome-binding factor A (142 aa).

The disordered stretch occupies residues 118-142 (DKNGDAEVDDTQVDDEPSVDSEKGE). Residues 123–136 (AEVDDTQVDDEPSV) are compositionally biased toward acidic residues.

The protein belongs to the RbfA family. As to quaternary structure, monomer. Binds 30S ribosomal subunits, but not 50S ribosomal subunits or 70S ribosomes.

The protein localises to the cytoplasm. One of several proteins that assist in the late maturation steps of the functional core of the 30S ribosomal subunit. Associates with free 30S ribosomal subunits (but not with 30S subunits that are part of 70S ribosomes or polysomes). Required for efficient processing of 16S rRNA. May interact with the 5'-terminal helix region of 16S rRNA. The chain is Ribosome-binding factor A from Colwellia psychrerythraea (strain 34H / ATCC BAA-681) (Vibrio psychroerythus).